A 57-amino-acid polypeptide reads, in one-letter code: MTILKWALIFLVVSIIAGIFGFTGISAASADIARILFYVFVVIFVVLLILGFTIFRA.

The next 2 membrane-spanning stretches (helical) occupy residues 6-26 (WALI…TGIS) and 35-55 (ILFY…FTIF).

It belongs to the UPF0391 family.

Its subcellular location is the cell membrane. The chain is UPF0391 membrane protein RPA3029 from Rhodopseudomonas palustris (strain ATCC BAA-98 / CGA009).